Here is a 352-residue protein sequence, read N- to C-terminus: UDP-N-acetylglucosamine--N-acetylmuramyl-(pentapeptide) pyrophosphoryl-undecaprenol N-acetylglucosamine transferase 2 (352 aa).

Residues 11–13, R164, S194, and Q289 each bind UDP-N-acetyl-alpha-D-glucosamine; that span reads SAG.

Belongs to the glycosyltransferase 28 family. MurG subfamily.

It localises to the cell membrane. It catalyses the reaction di-trans,octa-cis-undecaprenyl diphospho-N-acetyl-alpha-D-muramoyl-L-alanyl-D-glutamyl-meso-2,6-diaminopimeloyl-D-alanyl-D-alanine + UDP-N-acetyl-alpha-D-glucosamine = di-trans,octa-cis-undecaprenyl diphospho-[N-acetyl-alpha-D-glucosaminyl-(1-&gt;4)]-N-acetyl-alpha-D-muramoyl-L-alanyl-D-glutamyl-meso-2,6-diaminopimeloyl-D-alanyl-D-alanine + UDP + H(+). The protein operates within cell wall biogenesis; peptidoglycan biosynthesis. Cell wall formation. Catalyzes the transfer of a GlcNAc subunit on undecaprenyl-pyrophosphoryl-MurNAc-pentapeptide (lipid intermediate I) to form undecaprenyl-pyrophosphoryl-MurNAc-(pentapeptide)GlcNAc (lipid intermediate II). The polypeptide is UDP-N-acetylglucosamine--N-acetylmuramyl-(pentapeptide) pyrophosphoryl-undecaprenol N-acetylglucosamine transferase 2 (Bacillus thuringiensis subsp. konkukian (strain 97-27)).